A 210-amino-acid chain; its full sequence is MARRSQGTKLHLAVLCLVVSCHAIGLSDLMERASQRSDKLHSLSTSLTKDLDSHFPPMGRVMMPRPSMCHTSSLQTPKDKEQALKVSENELISLARSLLLAWNDPLLLLSSEAPTLPHPSNGDISSKIRELQDYSKSLGDGLDIMVNKMGPSSQYISSIPFKGGDLGNDKTSRLINFHFLMSCFRRDSHKIDSFLKVLRCRATKMRPEAC.

The N-terminal stretch at 1–23 (MARRSQGTKLHLAVLCLVVSCHA) is a signal peptide. 2 disulfides stabilise this stretch: C69-C183 and C200-C210.

Belongs to the somatotropin/prolactin family.

It is found in the secreted. This Oncorhynchus mykiss (Rainbow trout) protein is Prolactin (prl).